The primary structure comprises 480 residues: Methylenetetrahydrofolate--tRNA-(uracil-5-)-methyltransferase TrmFO (480 aa).

Residue 15–20 (GGGLAG) participates in FAD binding.

Belongs to the MnmG family. TrmFO subfamily. FAD serves as cofactor.

It localises to the cytoplasm. It carries out the reaction uridine(54) in tRNA + (6R)-5,10-methylene-5,6,7,8-tetrahydrofolate + NADH + H(+) = 5-methyluridine(54) in tRNA + (6S)-5,6,7,8-tetrahydrofolate + NAD(+). The enzyme catalyses uridine(54) in tRNA + (6R)-5,10-methylene-5,6,7,8-tetrahydrofolate + NADPH + H(+) = 5-methyluridine(54) in tRNA + (6S)-5,6,7,8-tetrahydrofolate + NADP(+). Catalyzes the folate-dependent formation of 5-methyl-uridine at position 54 (M-5-U54) in all tRNAs. In Caulobacter sp. (strain K31), this protein is Methylenetetrahydrofolate--tRNA-(uracil-5-)-methyltransferase TrmFO.